A 227-amino-acid polypeptide reads, in one-letter code: ATP-dependent dethiobiotin synthetase BioD (227 aa).

ATP is bound at residue 13-18 (DVGKTV). Threonine 17 serves as a coordination point for Mg(2+). Lysine 38 is a catalytic residue. ATP contacts are provided by residues aspartate 55, 116–119 (EGAG), 176–177 (NR), and 205–207 (PYI). Positions 55 and 116 each coordinate Mg(2+).

This sequence belongs to the dethiobiotin synthetase family. Homodimer. Mg(2+) serves as cofactor.

The protein localises to the cytoplasm. It carries out the reaction (7R,8S)-7,8-diammoniononanoate + CO2 + ATP = (4R,5S)-dethiobiotin + ADP + phosphate + 3 H(+). It participates in cofactor biosynthesis; biotin biosynthesis; biotin from 7,8-diaminononanoate: step 1/2. Its function is as follows. Catalyzes a mechanistically unusual reaction, the ATP-dependent insertion of CO2 between the N7 and N8 nitrogen atoms of 7,8-diaminopelargonic acid (DAPA, also called 7,8-diammoniononanoate) to form a ureido ring. The chain is ATP-dependent dethiobiotin synthetase BioD from Vibrio campbellii (strain ATCC BAA-1116).